Reading from the N-terminus, the 244-residue chain is Aspartate/glutamate leucyltransferase (244 aa).

This sequence belongs to the R-transferase family. Bpt subfamily.

It localises to the cytoplasm. The catalysed reaction is N-terminal L-glutamyl-[protein] + L-leucyl-tRNA(Leu) = N-terminal L-leucyl-L-glutamyl-[protein] + tRNA(Leu) + H(+). It carries out the reaction N-terminal L-aspartyl-[protein] + L-leucyl-tRNA(Leu) = N-terminal L-leucyl-L-aspartyl-[protein] + tRNA(Leu) + H(+). Functionally, functions in the N-end rule pathway of protein degradation where it conjugates Leu from its aminoacyl-tRNA to the N-termini of proteins containing an N-terminal aspartate or glutamate. The protein is Aspartate/glutamate leucyltransferase of Paramagnetospirillum magneticum (strain ATCC 700264 / AMB-1) (Magnetospirillum magneticum).